Consider the following 477-residue polypeptide: Glycogen synthase (477 aa).

Position 15 (lysine 15) interacts with ADP-alpha-D-glucose.

It belongs to the glycosyltransferase 1 family. Bacterial/plant glycogen synthase subfamily.

It catalyses the reaction [(1-&gt;4)-alpha-D-glucosyl](n) + ADP-alpha-D-glucose = [(1-&gt;4)-alpha-D-glucosyl](n+1) + ADP + H(+). It functions in the pathway glycan biosynthesis; glycogen biosynthesis. Synthesizes alpha-1,4-glucan chains using ADP-glucose. This is Glycogen synthase from Myxococcus xanthus (strain DK1622).